The primary structure comprises 128 residues: Fluoride-specific ion channel FluC (128 aa).

Helical transmembrane passes span 3 to 23 (FSVI…RFLI), 34 to 54 (LFPV…GFLY), 69 to 89 (FITG…ETLL), and 100 to 120 (FLNI…AIIL). Na(+) is bound by residues glycine 75 and threonine 78.

Belongs to the fluoride channel Fluc/FEX (TC 1.A.43) family.

It is found in the cell inner membrane. The catalysed reaction is fluoride(in) = fluoride(out). Its activity is regulated as follows. Na(+) is not transported, but it plays an essential structural role and its presence is essential for fluoride channel function. Functionally, fluoride-specific ion channel. Important for reducing fluoride concentration in the cell, thus reducing its toxicity. The polypeptide is Fluoride-specific ion channel FluC (Nitratiruptor sp. (strain SB155-2)).